A 560-amino-acid polypeptide reads, in one-letter code: Formate--tetrahydrofolate ligase (560 aa).

Residue 69–76 coordinates ATP; the sequence is TPAGEGKS.

Belongs to the formate--tetrahydrofolate ligase family.

The catalysed reaction is (6S)-5,6,7,8-tetrahydrofolate + formate + ATP = (6R)-10-formyltetrahydrofolate + ADP + phosphate. It participates in one-carbon metabolism; tetrahydrofolate interconversion. This Bacillus pumilus (strain SAFR-032) protein is Formate--tetrahydrofolate ligase.